The chain runs to 401 residues: Keratin-associated protein 10-4 (401 aa).

35 tandem repeats follow at residues Cys36–Pro40, Cys41–Ser45, Cys46–Ala50, Cys67–Thr71, Cys89–Ser93, Cys99–Ser103, Cys109–Val113, Cys114–Val118, Cys119–Val123, Cys124–Val128, Cys129–Ser133, Cys135–Ser139, Cys145–Ser149, Cys155–Ile159, Cys160–Val164, Cys172–Ser176, Cys186–Val190, Cys208–Ser212, Cys218–Ser222, Cys228–Val232, Cys233–Val237, Cys238–Val242, Cys250–Ser254, Cys270–Val274, Cys275–Val279, Cys280–Val284, Cys297–Ser301, Cys307–Ser311, Cys317–Val321, Cys322–Val326, Cys339–Ser343, Cys349–Ser353, Cys354–Ser358, Cys373–Val377, and Cys391–Ala395. The interval Cys36–Ala395 is 36 X 5 AA repeats of C-C-X(3).

This sequence belongs to the KRTAP type 10 family. Interacts with hair keratins. In terms of tissue distribution, restricted to hair root, not detected in any other tissues.

Functionally, in the hair cortex, hair keratin intermediate filaments are embedded in an interfilamentous matrix, consisting of hair keratin-associated proteins (KRTAP), which are essential for the formation of a rigid and resistant hair shaft through their extensive disulfide bond cross-linking with abundant cysteine residues of hair keratins. The matrix proteins include the high-sulfur and high-glycine-tyrosine keratins. The sequence is that of Keratin-associated protein 10-4 (KRTAP10-4) from Homo sapiens (Human).